The following is a 173-amino-acid chain: ATP-dependent protease subunit HslV (173 aa).

Threonine 2 is a catalytic residue. Residues glycine 158, aspartate 161, and serine 164 each coordinate Na(+).

This sequence belongs to the peptidase T1B family. HslV subfamily. A double ring-shaped homohexamer of HslV is capped on each side by a ring-shaped HslU homohexamer. The assembly of the HslU/HslV complex is dependent on binding of ATP.

Its subcellular location is the cytoplasm. It carries out the reaction ATP-dependent cleavage of peptide bonds with broad specificity.. Allosterically activated by HslU binding. Protease subunit of a proteasome-like degradation complex believed to be a general protein degrading machinery. This chain is ATP-dependent protease subunit HslV, found in Glaesserella parasuis serovar 5 (strain SH0165) (Haemophilus parasuis).